A 434-amino-acid polypeptide reads, in one-letter code: Lecithin-cholesterol acyltransferase-like 1 (434 aa).

The Acyl-ester intermediate role is filled by S191. Residues D354 and H386 each act as charge relay system in the active site.

It belongs to the AB hydrolase superfamily. Lipase family.

In Oryza sativa subsp. japonica (Rice), this protein is Lecithin-cholesterol acyltransferase-like 1.